A 567-amino-acid polypeptide reads, in one-letter code: Proline--tRNA ligase (567 aa).

Belongs to the class-II aminoacyl-tRNA synthetase family. ProS type 1 subfamily. As to quaternary structure, homodimer.

The protein resides in the cytoplasm. It carries out the reaction tRNA(Pro) + L-proline + ATP = L-prolyl-tRNA(Pro) + AMP + diphosphate. Catalyzes the attachment of proline to tRNA(Pro) in a two-step reaction: proline is first activated by ATP to form Pro-AMP and then transferred to the acceptor end of tRNA(Pro). As ProRS can inadvertently accommodate and process non-cognate amino acids such as alanine and cysteine, to avoid such errors it has two additional distinct editing activities against alanine. One activity is designated as 'pretransfer' editing and involves the tRNA(Pro)-independent hydrolysis of activated Ala-AMP. The other activity is designated 'posttransfer' editing and involves deacylation of mischarged Ala-tRNA(Pro). The misacylated Cys-tRNA(Pro) is not edited by ProRS. The polypeptide is Proline--tRNA ligase (Fusobacterium nucleatum subsp. nucleatum (strain ATCC 25586 / DSM 15643 / BCRC 10681 / CIP 101130 / JCM 8532 / KCTC 2640 / LMG 13131 / VPI 4355)).